A 518-amino-acid chain; its full sequence is Sodium-dependent glucose transporter 1 (518 aa).

Helical transmembrane passes span 19–39 (TFQD…FIFV), 53–73 (GFLV…SATT), 82–102 (CKTA…IGIL), 107–127 (NVLI…ALHF), 139–159 (LAKL…SDFH), 221–241 (FRRA…FFFY), 307–327 (TSSL…IATS), 347–367 (YTTI…LGEM), 376–396 (LQGK…ASIA), 400–420 (LFPV…KEDR), 438–458 (EEEN…EMIE), and 466–486 (SIIE…YNQY). The segment covering 414–426 (RQRKEDRKSEDQK) has biased composition (basic and acidic residues). The interval 414–448 (RQRKEDRKSEDQKALLSSSGLNEYEEENEEEDAEK) is disordered. Residues 436–448 (EYEEENEEEDAEK) show a composition bias toward acidic residues.

It belongs to the major facilitator superfamily.

Its subcellular location is the apical cell membrane. May function as a sodium-dependent glucose transporter. Potential channels for urea in the inner medulla of kidney. This chain is Sodium-dependent glucose transporter 1, found in Homo sapiens (Human).